Here is a 304-residue protein sequence, read N- to C-terminus: MEKFELHILGCGSALPTTRHFATSQVVNLRDKLFMIDCGEGAQMQLRKSRLKFSRLNHIFISHLHGDHCFGLMGLISTFGLLGRTAELHIHSPKGLEELLTPMLNFFCHTLAYKVIFHEFDTRQTSVVYEDRSMTVTTIPLQHRIPCCGFLFAEKARPNHIIRDMVDFYKVPVYELNRIKNGSDYVTPEGEVIANTRLTRPSDPPRKYAYCSDTIFRPEIVKQLSGVDLLFHEATFAESELARAKETYHTTAAQAARIALEAGVRQLVIGHFSARYEDESILLKEASAVFPNTILAKENLCISL.

Zn(2+) contacts are provided by histidine 63, histidine 65, aspartate 67, histidine 68, histidine 143, aspartate 213, and histidine 271. Catalysis depends on aspartate 67, which acts as the Proton acceptor.

This sequence belongs to the RNase Z family. As to quaternary structure, homodimer. It depends on Zn(2+) as a cofactor.

The enzyme catalyses Endonucleolytic cleavage of RNA, removing extra 3' nucleotides from tRNA precursor, generating 3' termini of tRNAs. A 3'-hydroxy group is left at the tRNA terminus and a 5'-phosphoryl group is left at the trailer molecule.. Zinc phosphodiesterase, which displays some tRNA 3'-processing endonuclease activity. Probably involved in tRNA maturation, by removing a 3'-trailer from precursor tRNA. The polypeptide is Ribonuclease Z (Bacteroides fragilis (strain ATCC 25285 / DSM 2151 / CCUG 4856 / JCM 11019 / LMG 10263 / NCTC 9343 / Onslow / VPI 2553 / EN-2)).